Here is a 136-residue protein sequence, read N- to C-terminus: Ig heavy chain V region XIG8 (136 aa).

A signal peptide spans glycine 1 to serine 18. Positions glutamine 19 to glutamine 128 constitute an Ig-like domain.

The chain is Ig heavy chain V region XIG8 from Xenopus laevis (African clawed frog).